Reading from the N-terminus, the 101-residue chain is NADH-quinone oxidoreductase subunit K (101 aa).

3 helical membrane passes run 4–24 (LADY…GIFI), 30–50 (LVLL…FIAF), and 61–81 (VFVF…LAIV).

This sequence belongs to the complex I subunit 4L family. NDH-1 is composed of 14 different subunits. Subunits NuoA, H, J, K, L, M, N constitute the membrane sector of the complex.

It is found in the cell inner membrane. It catalyses the reaction a quinone + NADH + 5 H(+)(in) = a quinol + NAD(+) + 4 H(+)(out). NDH-1 shuttles electrons from NADH, via FMN and iron-sulfur (Fe-S) centers, to quinones in the respiratory chain. The immediate electron acceptor for the enzyme in this species is believed to be ubiquinone. Couples the redox reaction to proton translocation (for every two electrons transferred, four hydrogen ions are translocated across the cytoplasmic membrane), and thus conserves the redox energy in a proton gradient. In Alkalilimnicola ehrlichii (strain ATCC BAA-1101 / DSM 17681 / MLHE-1), this protein is NADH-quinone oxidoreductase subunit K.